Consider the following 254-residue polypeptide: DNA repair protein RecO (254 aa).

Belongs to the RecO family.

Its function is as follows. Involved in DNA repair and RecF pathway recombination. The chain is DNA repair protein RecO from Anaeromyxobacter dehalogenans (strain 2CP-1 / ATCC BAA-258).